The following is a 204-amino-acid chain: Recombination protein RecR (204 aa).

Residues 63-78 form a C4-type zinc finger; the sequence is CRICCNVADSELCPIC. The 96-residue stretch at 86 to 181 folds into the Toprim domain; sequence NKICVVEQPQ…KVTRLARGLP (96 aa).

It belongs to the RecR family.

Functionally, may play a role in DNA repair. It seems to be involved in an RecBC-independent recombinational process of DNA repair. It may act with RecF and RecO. The chain is Recombination protein RecR from Dehalococcoides mccartyi (strain ATCC BAA-2100 / JCM 16839 / KCTC 5957 / BAV1).